The primary structure comprises 372 residues: Transaldolase 2 (372 aa).

Lys140 acts as the Schiff-base intermediate with substrate in catalysis.

It belongs to the transaldolase family. Type 2 subfamily.

It is found in the cytoplasm. It carries out the reaction D-sedoheptulose 7-phosphate + D-glyceraldehyde 3-phosphate = D-erythrose 4-phosphate + beta-D-fructose 6-phosphate. It participates in carbohydrate degradation; pentose phosphate pathway; D-glyceraldehyde 3-phosphate and beta-D-fructose 6-phosphate from D-ribose 5-phosphate and D-xylulose 5-phosphate (non-oxidative stage): step 2/3. In terms of biological role, transaldolase is important for the balance of metabolites in the pentose-phosphate pathway. This chain is Transaldolase 2, found in Streptomyces coelicolor (strain ATCC BAA-471 / A3(2) / M145).